The primary structure comprises 145 residues: Large ribosomal subunit protein uL13 (145 aa).

The protein belongs to the universal ribosomal protein uL13 family. In terms of assembly, part of the 50S ribosomal subunit.

Functionally, this protein is one of the early assembly proteins of the 50S ribosomal subunit, although it is not seen to bind rRNA by itself. It is important during the early stages of 50S assembly. The chain is Large ribosomal subunit protein uL13 from Exiguobacterium sibiricum (strain DSM 17290 / CCUG 55495 / CIP 109462 / JCM 13490 / 255-15).